The primary structure comprises 75 residues: Small ribosomal subunit protein bS18 (75 aa).

It belongs to the bacterial ribosomal protein bS18 family. As to quaternary structure, part of the 30S ribosomal subunit. Forms a tight heterodimer with protein bS6.

Binds as a heterodimer with protein bS6 to the central domain of the 16S rRNA, where it helps stabilize the platform of the 30S subunit. The protein is Small ribosomal subunit protein bS18 of Psychromonas ingrahamii (strain DSM 17664 / CCUG 51855 / 37).